The sequence spans 314 residues: Pathogenicity locus probable regulatory protein HrpR (314 aa).

Positions 11–239 (TRWNVTALSA…LKSAANAICP (229 aa)) constitute a Sigma-54 factor interaction domain. Residues 39 to 46 (GETGTGKD) and 101 to 110 (SNGGTLYLDE) each bind ATP. Positions 281-300 (FDAVLEELELPRRTLYHRMK) form a DNA-binding region, H-T-H motif.

Functionally, member of the two-component regulatory system HrpR/HrpS that regulates the activation of the sigma factor hrpL which itself induces the expression of hprD as well as other hrp loci which are involved in plant pathogenicity, hrmA and avr genes. Probably interacts with sigma-54. This Pseudomonas syringae pv. syringae protein is Pathogenicity locus probable regulatory protein HrpR (hrpR).